The primary structure comprises 229 residues: (S)-2-haloacid dehalogenase 2 (229 aa).

Aspartate 10 acts as the Nucleophile in catalysis. An (S)-2-haloacid-binding positions include 11–12, arginine 41, and 118–119; these read LY and SN. The interval 175–180 is important for catalytic activity; the sequence is SSNAWD.

It belongs to the HAD-like hydrolase superfamily. S-2-haloalkanoic acid dehalogenase family.

It catalyses the reaction an (S)-2-haloacid + H2O = a (2R)-2-hydroxycarboxylate + a halide anion + H(+). It carries out the reaction (S)-2-chloropropanoate + H2O = (R)-lactate + chloride + H(+). Functionally, catalyzes the hydrolytic dehalogenation of small (S)-2-haloalkanoic acids to yield the corresponding (R)-2-hydroxyalkanoic acids. Acts on acids of short chain lengths, C(2) to C(4), with inversion of configuration at C-2. Active with 2-halogenated carboxylic acids and converts only the S-isomer (or L-isomer) of 2-chloropropionic acid with inversion of configuration to produce R-lactate (or D-isomer). In Pseudomonas sp. (strain CBS-3), this protein is (S)-2-haloacid dehalogenase 2.